Here is a 308-residue protein sequence, read N- to C-terminus: Zinc-binding protein TroA (308 aa).

The first 22 residues, 1–22 (MIRERICACVLALGMLTGFTHA), serve as a signal peptide directing secretion. Zn(2+)-binding residues include His-68, His-133, His-199, and Asp-279.

This sequence belongs to the bacterial solute-binding protein 9 family. Monomer.

The protein localises to the periplasm. Part of the ATP-binding cassette (ABC) transport system TroABC involved in zinc import. Binds zinc with high affinity and specificity and delivers it to the membrane permease for translocation into the cytoplasm. This Treponema pallidum (strain Nichols) protein is Zinc-binding protein TroA (troA).